A 66-amino-acid chain; its full sequence is Small ribosomal subunit protein bS21 (66 aa).

The protein belongs to the bacterial ribosomal protein bS21 family.

The sequence is that of Small ribosomal subunit protein bS21 from Rickettsia akari (strain Hartford).